We begin with the raw amino-acid sequence, 187 residues long: Elongation factor P (187 aa).

This sequence belongs to the elongation factor P family.

It localises to the cytoplasm. It participates in protein biosynthesis; polypeptide chain elongation. Involved in peptide bond synthesis. Stimulates efficient translation and peptide-bond synthesis on native or reconstituted 70S ribosomes in vitro. Probably functions indirectly by altering the affinity of the ribosome for aminoacyl-tRNA, thus increasing their reactivity as acceptors for peptidyl transferase. This chain is Elongation factor P, found in Helicobacter pylori (strain G27).